Here is a 193-residue protein sequence, read N- to C-terminus: Potassium-transporting ATPase KdpC subunit (193 aa).

A helical membrane pass occupies residues 7–27; sequence PALVLFAALTLLTGVAYPLAV.

This sequence belongs to the KdpC family. In terms of assembly, the system is composed of three essential subunits: KdpA, KdpB and KdpC.

The protein localises to the cell inner membrane. Part of the high-affinity ATP-driven potassium transport (or Kdp) system, which catalyzes the hydrolysis of ATP coupled with the electrogenic transport of potassium into the cytoplasm. This subunit acts as a catalytic chaperone that increases the ATP-binding affinity of the ATP-hydrolyzing subunit KdpB by the formation of a transient KdpB/KdpC/ATP ternary complex. The sequence is that of Potassium-transporting ATPase KdpC subunit from Rhodospirillum rubrum (strain ATCC 11170 / ATH 1.1.1 / DSM 467 / LMG 4362 / NCIMB 8255 / S1).